Here is a 444-residue protein sequence, read N- to C-terminus: C4-dicarboxylate transport protein (444 aa).

Helical transmembrane passes span P17–G37, L57–M77, L92–V112, E139–A159, G161–G181, L201–I221, M234–V254, I320–G340, and A368–I388.

Belongs to the dicarboxylate/amino acid:cation symporter (DAACS) (TC 2.A.23) family.

Its subcellular location is the cell inner membrane. Responsible for the transport of dicarboxylates such as succinate, fumarate, and malate from the periplasm across the membrane. The protein is C4-dicarboxylate transport protein of Rhizobium johnstonii (strain DSM 114642 / LMG 32736 / 3841) (Rhizobium leguminosarum bv. viciae).